The sequence spans 194 residues: Putative L,D-transpeptidase YciB (194 aa).

The first 19 residues, 1 to 19, serve as a signal peptide directing secretion; the sequence is MKLSLFIIAVLMPVILLSA. Residue Cys20 is the site of N-palmitoyl cysteine attachment. A lipid anchor (S-diacylglycerol cysteine) is attached at Cys20. Positions 68 to 194 constitute a L,D-TPase catalytic domain; the sequence is VWIDVNVKEQ…IPEHTKVVIS (127 aa). The Proton donor/acceptor role is filled by His144. Cys170 (nucleophile) is an active-site residue.

The protein belongs to the YkuD family.

It localises to the cell membrane. The protein operates within cell wall biogenesis; peptidoglycan biosynthesis. This Bacillus subtilis (strain 168) protein is Putative L,D-transpeptidase YciB (yciB).